Reading from the N-terminus, the 50-residue chain is Putative protein HokF (50 aa).

A helical transmembrane segment spans residues 5–25; the sequence is YALVAVIVLCLTVPGFTLLVG.

It belongs to the Hok/Gef family.

The protein localises to the cell inner membrane. In terms of biological role, toxic component of a type I toxin-antitoxin (TA) system. When overexpressed kills cells within minutes; causes collapse of the transmembrane potential and arrest of respiration. Its toxic effect is probably neutralized by an antisense antitoxin Sok RNA. The polypeptide is Putative protein HokF (hokF) (Escherichia coli O157:H7).